The following is a 697-amino-acid chain: Elongation factor G (697 aa).

The region spanning 8–287 (ERVRNIGIAA…AVVDYLPAPT (280 aa)) is the tr-type G domain. GTP-binding positions include 17–24 (AHIDAGKT), 81–85 (DTPGH), and 135–138 (NKMD).

Belongs to the TRAFAC class translation factor GTPase superfamily. Classic translation factor GTPase family. EF-G/EF-2 subfamily.

It is found in the cytoplasm. Its function is as follows. Catalyzes the GTP-dependent ribosomal translocation step during translation elongation. During this step, the ribosome changes from the pre-translocational (PRE) to the post-translocational (POST) state as the newly formed A-site-bound peptidyl-tRNA and P-site-bound deacylated tRNA move to the P and E sites, respectively. Catalyzes the coordinated movement of the two tRNA molecules, the mRNA and conformational changes in the ribosome. This chain is Elongation factor G (fusA), found in Arthrospira platensis (Spirulina platensis).